Consider the following 338-residue polypeptide: D-erythrose-4-phosphate dehydrogenase (338 aa).

NAD(+) is bound at residue 11 to 12; the sequence is RI. Residues 153–155, arginine 199, 212–213, and arginine 235 each bind substrate; these read SCT and TK. Cysteine 154 functions as the Nucleophile in the catalytic mechanism. Residue asparagine 317 participates in NAD(+) binding.

This sequence belongs to the glyceraldehyde-3-phosphate dehydrogenase family. Epd subfamily. As to quaternary structure, homotetramer.

The protein resides in the cytoplasm. It carries out the reaction D-erythrose 4-phosphate + NAD(+) + H2O = 4-phospho-D-erythronate + NADH + 2 H(+). It participates in cofactor biosynthesis; pyridoxine 5'-phosphate biosynthesis; pyridoxine 5'-phosphate from D-erythrose 4-phosphate: step 1/5. Its function is as follows. Catalyzes the NAD-dependent conversion of D-erythrose 4-phosphate to 4-phosphoerythronate. The chain is D-erythrose-4-phosphate dehydrogenase from Shewanella loihica (strain ATCC BAA-1088 / PV-4).